Here is a 792-residue protein sequence, read N- to C-terminus: Phosphoenolpyruvate synthase (792 aa).

Histidine 421 functions as the Tele-phosphohistidine intermediate in the catalytic mechanism. Arginine 511, arginine 578, glutamate 680, glycine 701, serine 702, asparagine 703, and aspartate 704 together coordinate substrate. Glutamate 680 contacts Mg(2+). Aspartate 704 is a Mg(2+) binding site. Cysteine 751 acts as the Proton donor in catalysis.

It belongs to the PEP-utilizing enzyme family. In terms of assembly, homodimer. It depends on Mg(2+) as a cofactor.

It carries out the reaction pyruvate + ATP + H2O = phosphoenolpyruvate + AMP + phosphate + 2 H(+). Its pathway is carbohydrate biosynthesis; gluconeogenesis. Its activity is regulated as follows. Activated by a Pi-dependent pyrophosphorylation and inactivated by an ADP-dependent phosphorylation on a regulatory threonine. Both reactions are mediated by the bifunctional serine/threonine kinase and phosphorylase PpsR. Functionally, catalyzes the phosphorylation of pyruvate to phosphoenolpyruvate. In Escherichia coli (strain K12), this protein is Phosphoenolpyruvate synthase (ppsA).